Here is a 275-residue protein sequence, read N- to C-terminus: MGIKSFKPTSPGRRQMTVLTFEEVTKDKPEKSLVVTLTKTGGRNVYGRITVRHRGGGHKRKYRIIDFKRDKDGIPGKVAAIEYDPNRTAYIALIHYLDGEKRYIIAPYGLKVGDIIESGENVDIKVGNALPLRNIPVGTIIHNIELIPGKGGQLVRAAGTAAQLMAKEGDYVQVRMPSGEIRLIKADCRATIGQVSNLDHENVKIGKAGRSRWLGIRPTVRGSAMNPVDHPHGGGEGKAPIGHPGPLTPWGKPALGYKTRKKGKASDKFIIRRRK.

The interval A224 to K275 is disordered. The span at K264–K275 shows a compositional bias: basic and acidic residues.

It belongs to the universal ribosomal protein uL2 family. In terms of assembly, part of the 50S ribosomal subunit. Forms a bridge to the 30S subunit in the 70S ribosome.

In terms of biological role, one of the primary rRNA binding proteins. Required for association of the 30S and 50S subunits to form the 70S ribosome, for tRNA binding and peptide bond formation. It has been suggested to have peptidyltransferase activity; this is somewhat controversial. Makes several contacts with the 16S rRNA in the 70S ribosome. In Thermoanaerobacter pseudethanolicus (strain ATCC 33223 / 39E) (Clostridium thermohydrosulfuricum), this protein is Large ribosomal subunit protein uL2.